An 806-amino-acid chain; its full sequence is 85/88 kDa calcium-independent phospholipase A2 (806 aa).

ANK repeat units follow at residues 120 to 147, 151 to 181, 185 to 215, 219 to 248, 251 to 281, 286 to 312, 316 to 345, 349 to 378, and 382 to 403; these read WSVA…ANCA, EGCT…QMDV, KGET…GLNQ, QGLT…RCNI, PNGY…QIHS, YGAS…NVNS, AGNT…NADA, HGNT…EVDT, and FGET…KAIL. 2 consecutive transmembrane segments (helical) span residues 480–500 and 511–531; these read LLCL…LIAI and LFDW…ILHS. The PNPLA domain maps to 481-665; the sequence is LCLDGGGVKG…LANNPTLDAM (185 aa). Residues 485–490 carry the GXGXXG motif; that stretch reads GGGVKG. Residues 517–521 carry the GXSXG motif; sequence GTSTG. Ser-519 acts as the Nucleophile in catalysis. Asp-652 acts as the Proton acceptor in catalysis. The DGA/G signature appears at 652-654; it reads DGG. Positions 677–686 are calmodulin-binding (1-9-14 motif); the sequence is RKGQANKVKK. A calmodulin-binding (IQ motif) region spans residues 748–759; it reads AWCEMVGIQYFR.

As to quaternary structure, homodimer formed by catalytic domains tightly interacting through a large hydrophobic interface. The contact area involves 3 alpha helices, several loops and a part of the beta sheet from each monomer. Both active sites of the dimer are in close proximity adopting an open conformation that provide sufficient space for phospholipid access and favoring cooperativity in deacylation-reacylation reactions. Each monomer has 9 ankyrin repeats stacked side-by-side in an elongated structure oriented outwards from the catalytic core. Four different transcripts were found to be expressed in a distinct tissue distribution.

It localises to the cytoplasm. Its subcellular location is the cell membrane. The protein localises to the mitochondrion. The protein resides in the cell projection. It is found in the pseudopodium. The enzyme catalyses a 1,2-diacyl-sn-glycero-3-phosphocholine + H2O = a 1-acyl-sn-glycero-3-phosphocholine + a fatty acid + H(+). It catalyses the reaction a 1-O-alkyl-2-acyl-sn-glycero-3-phosphocholine + H2O = a 1-O-alkyl-sn-glycero-3-phosphocholine + a fatty acid + H(+). It carries out the reaction 1,2-dihexadecanoyl-sn-glycero-3-phosphocholine + H2O = 1-hexadecanoyl-sn-glycero-3-phosphocholine + hexadecanoate + H(+). The catalysed reaction is 1-hexadecanoyl-2-(9Z-octadecenoyl)-sn-glycero-3-phosphocholine + H2O = 1-hexadecanoyl-sn-glycero-3-phosphocholine + (9Z)-octadecenoate + H(+). The enzyme catalyses 1-hexadecanoyl-2-(9Z,12Z-octadecadienoyl)-sn-glycero-3-phosphocholine + H2O = (9Z,12Z)-octadecadienoate + 1-hexadecanoyl-sn-glycero-3-phosphocholine + H(+). It catalyses the reaction 1-hexadecanoyl-2-(5Z,8Z,11Z,14Z-eicosatetraenoyl)-sn-glycero-3-phosphocholine + H2O = 1-hexadecanoyl-sn-glycero-3-phosphocholine + (5Z,8Z,11Z,14Z)-eicosatetraenoate + H(+). It carries out the reaction 1-octadecanoyl-2-(5Z,8Z,11Z,14Z-eicosatetraenoyl)-sn-glycero-3-phosphocholine + H2O = 1-octadecanoyl-sn-glycero-3-phosphocholine + (5Z,8Z,11Z,14Z)-eicosatetraenoate + H(+). The catalysed reaction is 1-hexadecanoyl-2-(5Z,8Z,11Z,14Z-eicosatetraenoyl)-sn-glycero-3-phosphoethanolamine + H2O = 1-hexadecanoyl-sn-glycero-3-phosphoethanolamine + (5Z,8Z,11Z,14Z)-eicosatetraenoate + H(+). The enzyme catalyses 1,2-dihexadecanoyl-sn-glycero-3-phosphate + H2O = 1-hexadecanoyl-sn-glycero-3-phosphate + hexadecanoate + H(+). It catalyses the reaction a 1-acyl-sn-glycero-3-phosphocholine + H2O = sn-glycerol 3-phosphocholine + a fatty acid + H(+). It carries out the reaction 1-hexadecanoyl-sn-glycero-3-phosphocholine + H2O = sn-glycerol 3-phosphocholine + hexadecanoate + H(+). The catalysed reaction is 1-(5Z,8Z,11Z,14Z-eicosatetraenoyl)-sn-glycero-3-phosphocholine + H2O = sn-glycerol 3-phosphocholine + (5Z,8Z,11Z,14Z)-eicosatetraenoate + H(+). The enzyme catalyses 2-(5Z,8Z,11Z,14Z)-eicosatetraenoyl-sn-glycero-3-phosphocholine + H2O = sn-glycerol 3-phosphocholine + (5Z,8Z,11Z,14Z)-eicosatetraenoate + H(+). It catalyses the reaction 1-O-hexadecyl-2-(5Z,8Z,11Z,14Z)-eicosatetraenoyl-sn-glycero-3-phosphocholine + H2O = 1-O-hexadecyl-sn-glycero-3-phosphocholine + (5Z,8Z,11Z,14Z)-eicosatetraenoate + H(+). It carries out the reaction 1-O-hexadecyl-2-acetyl-sn-glycero-3-phosphocholine + H2O = 1-O-hexadecyl-sn-glycero-3-phosphocholine + acetate + H(+). The catalysed reaction is hexadecanoyl-CoA + H2O = hexadecanoate + CoA + H(+). The enzyme catalyses 1',3'-bis[1,2-di-(9Z-octadecenoyl)-sn-glycero-3-phospho]-glycerol + H2O = 1'-[1,2-di-(9Z-octadecenoyl)-sn-glycero-3-phospho]-3'-[1-(9Z-octadecenoyl)-sn-glycero-3-phospho]-glycerol + (9Z)-octadecenoate + H(+). It catalyses the reaction 1'-[1,2-di-(9Z-octadecenoyl)-sn-glycero-3-phospho]-3'-[1-(9Z-octadecenoyl)-sn-glycero-3-phospho]-glycerol + H2O = 1',3'-bis-[1-(9Z-octadecenoyl)-sn-glycero-3-phospho]-glycerol + (9Z)-octadecenoate + H(+). It carries out the reaction 1',3'-bis-[1,2-di-(9Z,12Z-octadecadienoyl)-sn-glycero-3-phospho]-glycerol + H2O = 1'-[1,2-di-(9Z,12Z-octadecadienoyl)-sn-glycero-3-phospho]-3'-[1-(9Z,12Z-octadecadienoyl)-sn-glycero-3-phospho]-glycerol + (9Z,12Z)-octadecadienoate + H(+). The catalysed reaction is 1-octadecanoyl-2-(15-hydroxy-(5Z,8Z,11Z,13E)-eicosatetraenoyl)-sn-glycero-3-phosphoethanolamine + H2O = 1-octadecanoyl-sn-glycero-3-phosphoethanolamine + 15-hydroxy-(5Z,8Z,11Z,13E)-eicosatetraenoate + H(+). Its activity is regulated as follows. Activated by ATP. Inhibited by calcium-activated calmodulin. Inhibited by bromoenol lactone (BEL). Calcium-independent phospholipase involved in phospholipid remodeling with implications in cellular membrane homeostasis, mitochondrial integrity and signal transduction. Hydrolyzes the ester bond of the fatty acyl group attached at sn-1 or sn-2 position of phospholipids (phospholipase A1 and A2 activity respectively), producing lysophospholipids that are used in deacylation-reacylation cycles. Hydrolyzes both saturated and unsaturated long fatty acyl chains in various glycerophospholipid classes such as phosphatidylcholines, phosphatidylethanolamines and phosphatidates, with a preference for hydrolysis at sn-2 position. Can further hydrolyze lysophospholipids carrying saturated fatty acyl chains (lysophospholipase activity). Upon oxidative stress, contributes to remodeling of mitochondrial phospholipids in pancreatic beta cells, in a repair mechanism to reduce oxidized lipid content. Preferentially hydrolyzes oxidized polyunsaturated fatty acyl chains from cardiolipins, yielding monolysocardiolipins that can be reacylated with unoxidized fatty acyls to regenerate native cardiolipin species. Hydrolyzes oxidized glycerophosphoethanolamines present in pancreatic islets, releasing oxidized polyunsaturated fatty acids such as hydroxyeicosatetraenoates (HETEs). Has thioesterase activity toward fatty-acyl CoA releasing CoA-SH known to facilitate fatty acid transport and beta-oxidation in mitochondria particularly in skeletal muscle. Plays a role in regulation of membrane dynamics and homeostasis. Selectively hydrolyzes sn-2 arachidonoyl group in plasmalogen phospholipids, structural components of lipid rafts and myelin. Regulates F-actin polymerization at the pseudopods, which is required for both speed and directionality of MCP1/CCL2-induced monocyte chemotaxis. Targets membrane phospholipids to produce potent lipid signaling messengers. Generates lysophosphatidate (LPA, 1-acyl-glycerol-3-phosphate), which acts via G-protein receptors in various cell types. Has phospholipase A2 activity toward platelet-activating factor (PAF, 1-O-alkyl-2-acetyl-sn-glycero-3-phosphocholine), likely playing a role in inactivation of this potent pro-inflammatory signaling lipid. In response to glucose, amplifies calcium influx in pancreatic beta cells to promote INS secretion. In terms of biological role, lacks the catalytic domain and may act as a negative regulator of the catalytically active isoforms. This Homo sapiens (Human) protein is 85/88 kDa calcium-independent phospholipase A2 (PLA2G6).